Here is a 501-residue protein sequence, read N- to C-terminus: Aldehyde dehydrogenase 1A1 (501 aa).

Serine 2 is subject to N-acetylserine. Lysine 91 and lysine 128 each carry N6-acetyllysine. NAD(+) contacts are provided by residues isoleucine 167 to asparagine 170, lysine 193 to glutamate 196, glycine 226 to proline 227, and glycine 246 to serine 247. Lysine 252 carries the N6-acetyllysine modification. Glutamate 269 serves as the catalytic Proton acceptor. Glutamate 269–glycine 271 serves as a coordination point for NAD(+). Cysteine 303 (nucleophile) is an active-site residue. The interval leucine 336–serine 501 is mediates interaction with PRMT3. At threonine 337 the chain carries Phosphothreonine. Position 349-353 (glutamate 349–lysine 353) interacts with NAD(+). An N6-acetyllysine mark is found at lysine 353 and lysine 367. Glutamate 400–phenylalanine 402 lines the NAD(+) pocket. N6-acetyllysine is present on lysine 410. Residue serine 413 is modified to Phosphoserine. An N6-acetyllysine mark is found at lysine 419, lysine 435, and lysine 495.

Belongs to the aldehyde dehydrogenase family. As to quaternary structure, homotetramer. Interacts with PRMT3; the interaction is direct, inhibits ALDH1A1 aldehyde dehydrogenase activity and is independent of the methyltransferase activity of PRMT3. In terms of processing, the N-terminus is blocked most probably by acetylation. In terms of tissue distribution, expressed by erythrocytes (at protein level).

It is found in the cytoplasm. The protein resides in the cytosol. Its subcellular location is the cell projection. It localises to the axon. The enzyme catalyses an aldehyde + NAD(+) + H2O = a carboxylate + NADH + 2 H(+). It carries out the reaction all-trans-retinal + NAD(+) + H2O = all-trans-retinoate + NADH + 2 H(+). It catalyses the reaction 9-cis-retinal + NAD(+) + H2O = 9-cis-retinoate + NADH + 2 H(+). The catalysed reaction is 11-cis-retinal + NAD(+) + H2O = 11-cis-retinoate + NADH + 2 H(+). The enzyme catalyses 13-cis-retinal + NAD(+) + H2O = 13-cis-retinoate + NADH + 2 H(+). It carries out the reaction 3-deoxyglucosone + NAD(+) + H2O = 2-dehydro-3-deoxy-D-gluconate + NADH + 2 H(+). It catalyses the reaction (E)-4-hydroxynon-2-enal + NAD(+) + H2O = (E)-4-hydroxynon-2-enoate + NADH + 2 H(+). The catalysed reaction is malonaldehyde + NAD(+) + H2O = 3-oxopropanoate + NADH + 2 H(+). The enzyme catalyses hexanal + NAD(+) + H2O = hexanoate + NADH + 2 H(+). It carries out the reaction propanal + NAD(+) + H2O = propanoate + NADH + 2 H(+). It catalyses the reaction acetaldehyde + NAD(+) + H2O = acetate + NADH + 2 H(+). The catalysed reaction is benzaldehyde + NAD(+) + H2O = benzoate + NADH + 2 H(+). The enzyme catalyses 4-aminobutanal + NAD(+) + H2O = 4-aminobutanoate + NADH + 2 H(+). The protein operates within cofactor metabolism; retinol metabolism. With respect to regulation, inhibited by citral, disulfiram, and cyanamide. Activated by diethylstilbestrol. Inhibited by duocarmycin analogs. In terms of biological role, cytosolic dehydrogenase that catalyzes the irreversible oxidation of a wide range of aldehydes to their corresponding carboxylic acid. Functions downstream of retinol dehydrogenases and catalyzes the oxidation of retinaldehyde into retinoic acid, the second step in the oxidation of retinol/vitamin A into retinoic acid. This pathway is crucial to control the levels of retinol and retinoic acid, two important molecules which excess can be teratogenic and cytotoxic. Also oxidizes aldehydes resulting from lipid peroxidation like (E)-4-hydroxynon-2-enal/HNE, malonaldehyde and hexanal that form protein adducts and are highly cytotoxic. By participating for instance to the clearance of (E)-4-hydroxynon-2-enal/HNE in the lens epithelium prevents the formation of HNE-protein adducts and lens opacification. Also functions downstream of fructosamine-3-kinase in the fructosamine degradation pathway by catalyzing the oxidation of 3-deoxyglucosone, the carbohydrate product of fructosamine 3-phosphate decomposition, which is itself a potent glycating agent that may react with lysine and arginine side-chains of proteins. Also has an aminobutyraldehyde dehydrogenase activity and is probably part of an alternative pathway for the biosynthesis of GABA/4-aminobutanoate in midbrain, thereby playing a role in GABAergic synaptic transmission. The chain is Aldehyde dehydrogenase 1A1 from Homo sapiens (Human).